The following is a 35-amino-acid chain: KEGYPKNSEGCKITCLFNDPYCKGLCINLSTQADY.

An LCN-type CS-alpha/beta domain is found at 1-35; it reads KEGYPKNSEGCKITCLFNDPYCKGLCINLSTQADY.

Expressed by the venom gland.

It is found in the secreted. Its function is as follows. Causes paralysis and death in insects (A.domestica). In Rhopalurus junceus (Caribbean blue scorpion), this protein is Putative neurotoxin.